Reading from the N-terminus, the 270-residue chain is Interleukin-33 (270 aa).

The tract at residues Met-1–Thr-65 is homeodomain-like HTH domain. Positions Met-1–Phe-94 are excised as a propeptide. The interval Thr-64 to Ser-111 is interaction with RELA.

This sequence belongs to the IL-1 family. Highly divergent. As to quaternary structure, forms a 1:1:1 heterotrimeric complex with its primary high-affinity receptor IL1RL1 and the coreceptor IL1RAP. Interacts with cargo receptor TMED10; the interaction mediates the translocation from the cytoplasm into the ERGIC (endoplasmic reticulum-Golgi intermediate compartment) and thereby secretion. Post-translationally, the full-length protein can be released from cells and is able to signal via the IL1RL1/ST2 receptor. However, proteolytic processing by CELA1, CSTG/cathepsin G and ELANE/neutrophil elastase produces C-terminal peptides that are more active than the unprocessed full-length protein. May also be proteolytically processed by calpains. Proteolytic cleavage mediated by apoptotic caspases including CASP3 and CASP7 results in IL33 inactivation. In vitro proteolytic cleavage by CASP1 was reported but could not be confirmed in vivo suggesting that IL33 is probably not a direct substrate for that caspase.

It is found in the nucleus. The protein localises to the chromosome. The protein resides in the cytoplasm. Its subcellular location is the cytoplasmic vesicle. It localises to the secretory vesicle. It is found in the secreted. In terms of biological role, cytokine that binds to and signals through the IL1RL1/ST2 receptor which in turn activates NF-kappa-B and MAPK signaling pathways in target cells. Involved in the maturation of Th2 cells inducing the secretion of T-helper type 2-associated cytokines. Also involved in activation of mast cells, basophils, eosinophils and natural killer cells. Acts as a chemoattractant for Th2 cells, and may function as an 'alarmin', that amplifies immune responses during tissue injury. Induces rapid UCP2-dependent mitochondrial rewiring that attenuates the generation of reactive oxygen species and preserves the integrity of Krebs cycle required for persistent production of itaconate and subsequent GATA3-dependent differentiation of inflammation-resolving alternatively activated macrophages. Functionally, in quiescent endothelia the uncleaved form is constitutively and abundantly expressed, and acts as a chromatin-associated nuclear factor with transcriptional repressor properties, it may sequester nuclear NF-kappaB/RELA, lowering expression of its targets. This form is rapidely lost upon angiogenic or pro-inflammatory activation. In Pongo abelii (Sumatran orangutan), this protein is Interleukin-33 (IL33).